The following is a 200-amino-acid chain: Large ribosomal subunit protein uL4 (200 aa).

The interval 44–71 (AQKTRAEVSGGGKKPWRQKGTGRARAGS) is disordered.

Belongs to the universal ribosomal protein uL4 family. Part of the 50S ribosomal subunit.

In terms of biological role, one of the primary rRNA binding proteins, this protein initially binds near the 5'-end of the 23S rRNA. It is important during the early stages of 50S assembly. It makes multiple contacts with different domains of the 23S rRNA in the assembled 50S subunit and ribosome. Functionally, forms part of the polypeptide exit tunnel. The sequence is that of Large ribosomal subunit protein uL4 from Psychrobacter sp. (strain PRwf-1).